The chain runs to 479 residues: UDP-glucose flavonoid 3-O-glucosyltransferase 6 (479 aa).

Catalysis depends on His17, which acts as the Proton acceptor. Residue His17 coordinates an anthocyanidin. The active-site Charge relay is the Asp121. UDP-alpha-D-glucose-binding residues include Thr143, Ala354, Gln356, His371, Trp374, Asn375, Ser376, and Glu379. Ala394 contacts an anthocyanidin. 2 residues coordinate UDP-alpha-D-glucose: Glu395 and Gln396. The disordered stretch occupies residues 454-479; sequence MSRKALEEDGSSYSSLGRFLDQIQTS.

It belongs to the UDP-glycosyltransferase family. As to expression, strongly expressed in achenes, with lower expression levels detected in receptacles.

It carries out the reaction a flavonol + UDP-alpha-D-glucose = a flavonol 3-O-beta-D-glucoside + UDP + H(+). In terms of biological role, broad spectrum multifunctional glucosyltransferase. Catalyzes the formation of flavonol 3-O-glucosides during fruit ripening. Accepted substrates include several flavonoids, hydroxycoumarins and beta-naphthols. Uses UDP-Glc as a sugar donor, but not UDP-Gal or UDP-GlcUA. May also be involved in detoxification of xenobiotics. The sequence is that of UDP-glucose flavonoid 3-O-glucosyltransferase 6 from Fragaria ananassa (Strawberry).